The sequence spans 75 residues: Small ribosomal subunit protein bS18 (75 aa).

A2 carries the post-translational modification N-acetylalanine.

This sequence belongs to the bacterial ribosomal protein bS18 family. Part of the 30S ribosomal subunit. Forms a tight heterodimer with protein bS6.

Functionally, binds as a heterodimer with protein bS6 to the central domain of the 16S rRNA, where it helps stabilize the platform of the 30S subunit. The sequence is that of Small ribosomal subunit protein bS18 (rpsR) from Salmonella typhimurium (strain LT2 / SGSC1412 / ATCC 700720).